A 170-amino-acid polypeptide reads, in one-letter code: Acireductone dioxygenase (170 aa).

Fe(2+)-binding residues include His99, His101, Glu105, and His144. Ni(2+)-binding residues include His99, His101, Glu105, and His144.

This sequence belongs to the acireductone dioxygenase (ARD) family. Monomer. Fe(2+) serves as cofactor. The cofactor is Ni(2+).

It catalyses the reaction 1,2-dihydroxy-5-(methylsulfanyl)pent-1-en-3-one + O2 = 3-(methylsulfanyl)propanoate + CO + formate + 2 H(+). The enzyme catalyses 1,2-dihydroxy-5-(methylsulfanyl)pent-1-en-3-one + O2 = 4-methylsulfanyl-2-oxobutanoate + formate + 2 H(+). Its pathway is amino-acid biosynthesis; L-methionine biosynthesis via salvage pathway; L-methionine from S-methyl-5-thio-alpha-D-ribose 1-phosphate: step 5/6. Its function is as follows. Catalyzes 2 different reactions between oxygen and the acireductone 1,2-dihydroxy-3-keto-5-methylthiopentene (DHK-MTPene) depending upon the metal bound in the active site. Fe-containing acireductone dioxygenase (Fe-ARD) produces formate and 2-keto-4-methylthiobutyrate (KMTB), the alpha-ketoacid precursor of methionine in the methionine recycle pathway. Ni-containing acireductone dioxygenase (Ni-ARD) produces methylthiopropionate, carbon monoxide and formate, and does not lie on the methionine recycle pathway. This chain is Acireductone dioxygenase, found in Bacillus cereus (strain ZK / E33L).